We begin with the raw amino-acid sequence, 193 residues long: dCTP deaminase (193 aa).

DCTP contacts are provided by residues 110–115 (RSSLAR), D128, 136–138 (VLE), Y171, K178, and Q182. Residue E138 is the Proton donor/acceptor of the active site.

It belongs to the dCTP deaminase family. As to quaternary structure, homotrimer.

It carries out the reaction dCTP + H2O + H(+) = dUTP + NH4(+). Its pathway is pyrimidine metabolism; dUMP biosynthesis; dUMP from dCTP (dUTP route): step 1/2. In terms of biological role, catalyzes the deamination of dCTP to dUTP. This chain is dCTP deaminase, found in Escherichia coli (strain K12 / MC4100 / BW2952).